The following is a 1185-amino-acid chain: Chromosome partition protein Smc (1185 aa).

34–41 is an ATP binding site; sequence PNGSGKSN. 2 coiled-coil regions span residues 174 to 376 and 412 to 526; these read WRRS…EKDI and ENIV…KLDV. Residues 534 to 644 enclose the SMC hinge domain; it reads VGEIISLQKK…CENIDNAFEI (111 aa). Residues 679-1039 are a coiled coil; that stretch reads NIIGRKREIE…IDAMTEKMKG (361 aa).

This sequence belongs to the SMC family. As to quaternary structure, homodimer.

The protein resides in the cytoplasm. In terms of biological role, required for chromosome condensation and partitioning. The polypeptide is Chromosome partition protein Smc (Clostridium kluyveri (strain NBRC 12016)).